The sequence spans 519 residues: Cytochrome P450 52A10 (519 aa).

Position 466 (cysteine 466) interacts with heme.

The protein belongs to the cytochrome P450 family. The cofactor is heme.

It is found in the membrane. Functionally, together with an NADPH cytochrome P450 the enzyme system catalyzes the terminal hydroxylation as the first step in the assimilation of alkanes and fatty acids. This Candida maltosa (Yeast) protein is Cytochrome P450 52A10 (CYP52A10).